The chain runs to 425 residues: Serine--tRNA ligase (425 aa).

Residue Thr-230–Glu-232 participates in L-serine binding. Arg-261–Glu-263 contacts ATP. Glu-284 provides a ligand contact to L-serine. Glu-348–Ser-351 contacts ATP. Ser-384 contributes to the L-serine binding site.

The protein belongs to the class-II aminoacyl-tRNA synthetase family. Type-1 seryl-tRNA synthetase subfamily. In terms of assembly, homodimer. The tRNA molecule binds across the dimer.

The protein resides in the cytoplasm. It carries out the reaction tRNA(Ser) + L-serine + ATP = L-seryl-tRNA(Ser) + AMP + diphosphate + H(+). The catalysed reaction is tRNA(Sec) + L-serine + ATP = L-seryl-tRNA(Sec) + AMP + diphosphate + H(+). It functions in the pathway aminoacyl-tRNA biosynthesis; selenocysteinyl-tRNA(Sec) biosynthesis; L-seryl-tRNA(Sec) from L-serine and tRNA(Sec): step 1/1. Functionally, catalyzes the attachment of serine to tRNA(Ser). Is also able to aminoacylate tRNA(Sec) with serine, to form the misacylated tRNA L-seryl-tRNA(Sec), which will be further converted into selenocysteinyl-tRNA(Sec). This Streptococcus gordonii (strain Challis / ATCC 35105 / BCRC 15272 / CH1 / DL1 / V288) protein is Serine--tRNA ligase.